We begin with the raw amino-acid sequence, 241 residues long: Protein unc-119 homolog B-B (241 aa).

Residues 1 to 46 are disordered; the sequence is MSGSNREAALAGQPKDERKKSGGGVINRLKARRVQGKESGTSDQSS. Tyrosine 132 is a tetradecanoate binding site.

Belongs to the PDE6D/unc-119 family.

It localises to the cell projection. The protein localises to the cilium. Functionally, myristoyl-binding protein that acts as a cargo adapter: specifically binds the myristoyl moiety of a subset of N-terminally myristoylated proteins and is required for their localization. Plays a key role in localization of proteins to the primary cilium membrane. This chain is Protein unc-119 homolog B-B (unc119b-b), found in Xenopus laevis (African clawed frog).